We begin with the raw amino-acid sequence, 147 residues long: Angiogenin (147 aa).

The N-terminal stretch at 1-24 (MVMGLGVLLLVFVLGLGLTPPTLA) is a signal peptide. A Pyrrolidone carboxylic acid modification is found at glutamine 25. The active-site Proton acceptor is the histidine 37. TRNA-binding residues include arginine 45 and aspartate 46. 3 cysteine pairs are disulfide-bonded: cysteine 50/cysteine 105, cysteine 63/cysteine 116, and cysteine 81/cysteine 131. Positions 55-59 (RRRGL) match the Nucleolar localization signal motif. Residues cysteine 105 and valine 127 each coordinate tRNA. Histidine 138 acts as the Proton donor in catalysis.

The protein belongs to the pancreatic ribonuclease family. Homodimer. Interacts with RNH1; inhibiting ANG ribonuclease activity. Interacts with PCNA.

The protein resides in the secreted. It is found in the nucleus. It localises to the nucleolus. Its subcellular location is the cytoplasm. The protein localises to the stress granule. Has weak tRNA ribonuclease activity by itself due to partial autoinhibition by its C-terminus, which folds into a short alpha-helix that partially occludes the substrate-binding site. In absence of stress, the ribonuclease activity is inhibited by RNH1 in the cytoplasm. In response to stress, dissociates from RNH1 in the cytoplasm and associates with cytoplasmic ribosomes with vacant A-sites: ribosomes directly activate the tRNA ribonuclease activity of ANG by refolding the C-terminal alpha-helix. In response to stress, the angiogenic activity of ANG is inhibited by RNH1 in the nucleus. Secreted ribonuclease that can either promote or restrict cell proliferation of target cells, depending on the context. Endocytosed in target cells via its receptor PLXNB2 and translocates to the cytoplasm or nucleus. Under stress conditions, localizes to the cytoplasm and promotes the assembly of stress granules (SGs): specifically cleaves a subset of tRNAs within anticodon loops to produce tRNA-derived stress-induced fragments (tiRNAs), resulting in translation repression and inhibition of cell proliferation. tiRNas also prevent formation of apoptosome, thereby promoting cell survival. Preferentially cleaves RNAs between a pyrimidine and an adenosine residue, suggesting that it cleaves the anticodon loop of tRNA(Ala) (32-UUAGCAU-38) after positions 33 and 36. Cleaves a subset of tRNAs, including tRNA(Ala), tRNA(Glu), tRNA(Gly), tRNA(Lys), tRNA(Val), tRNA(His), tRNA(Asp) and tRNA(Sec). Under growth conditions and in differentiated cells, translocates to the nucleus and stimulates ribosomal RNA (rRNA) transcription, including that containing the initiation site sequences of 45S rRNA, thereby promoting cell growth and proliferation. Angiogenin induces vascularization of normal and malignant tissues via its ability to promote rRNA transcription. Involved in hematopoietic stem and progenitor cell (HSPC) growth and survival by promoting rRNA transcription in growth conditions and inhibiting translation in response to stress, respectively. Mediates the crosstalk between myeloid and intestinal epithelial cells to protect the intestinal epithelial barrier integrity: secreted by myeloid cells and promotes intestinal epithelial cells proliferation and survival. Also mediates osteoclast-endothelial cell crosstalk in growing bone: produced by osteoclasts and protects the neighboring vascular cells against senescence by promoting rRNA transcription. The sequence is that of Angiogenin (ANG) from Gorilla gorilla gorilla (Western lowland gorilla).